The primary structure comprises 100 residues: MELTPREKDKLLLFTAALLAERRLARGLRLNYPEAVALISAAVLEGARDGRTVAELMSLGREVLVREQVMDGVPEMLHDVQVEATFPDGTKLVTVHDPIV.

It belongs to the urease gamma subunit family. Heterotrimer of UreA (gamma), UreB (beta) and UreC (alpha) subunits. Three heterotrimers associate to form the active enzyme.

Its subcellular location is the cytoplasm. It carries out the reaction urea + 2 H2O + H(+) = hydrogencarbonate + 2 NH4(+). It participates in nitrogen metabolism; urea degradation; CO(2) and NH(3) from urea (urease route): step 1/1. The protein is Urease subunit gamma of Pseudomonas entomophila (strain L48).